The chain runs to 66 residues: uncharacterized protein (66 aa).

This is an uncharacterized protein from Saccharomyces cerevisiae (strain ATCC 204508 / S288c) (Baker's yeast).